We begin with the raw amino-acid sequence, 393 residues long: NAD(P)H-quinone oxidoreductase subunit H, chloroplastic (393 aa).

This sequence belongs to the complex I 49 kDa subunit family. NDH is composed of at least 16 different subunits, 5 of which are encoded in the nucleus.

It localises to the plastid. The protein localises to the chloroplast thylakoid membrane. The enzyme catalyses a plastoquinone + NADH + (n+1) H(+)(in) = a plastoquinol + NAD(+) + n H(+)(out). It carries out the reaction a plastoquinone + NADPH + (n+1) H(+)(in) = a plastoquinol + NADP(+) + n H(+)(out). In terms of biological role, NDH shuttles electrons from NAD(P)H:plastoquinone, via FMN and iron-sulfur (Fe-S) centers, to quinones in the photosynthetic chain and possibly in a chloroplast respiratory chain. The immediate electron acceptor for the enzyme in this species is believed to be plastoquinone. Couples the redox reaction to proton translocation, and thus conserves the redox energy in a proton gradient. This is NAD(P)H-quinone oxidoreductase subunit H, chloroplastic from Arabis hirsuta (Hairy rock-cress).